A 373-amino-acid chain; its full sequence is 4-hydroxy-3-methylbut-2-en-1-yl diphosphate synthase (flavodoxin) (373 aa).

4 residues coordinate [4Fe-4S] cluster: C270, C273, C305, and E312.

Belongs to the IspG family. Requires [4Fe-4S] cluster as cofactor.

It catalyses the reaction (2E)-4-hydroxy-3-methylbut-2-enyl diphosphate + oxidized [flavodoxin] + H2O + 2 H(+) = 2-C-methyl-D-erythritol 2,4-cyclic diphosphate + reduced [flavodoxin]. The protein operates within isoprenoid biosynthesis; isopentenyl diphosphate biosynthesis via DXP pathway; isopentenyl diphosphate from 1-deoxy-D-xylulose 5-phosphate: step 5/6. Converts 2C-methyl-D-erythritol 2,4-cyclodiphosphate (ME-2,4cPP) into 1-hydroxy-2-methyl-2-(E)-butenyl 4-diphosphate. This is 4-hydroxy-3-methylbut-2-en-1-yl diphosphate synthase (flavodoxin) from Klebsiella pneumoniae (strain 342).